A 180-amino-acid polypeptide reads, in one-letter code: NADH-quinone oxidoreductase subunit I (180 aa).

2 consecutive 4Fe-4S ferredoxin-type domains span residues 50 to 80 (LTRN…LQKS) and 90 to 119 (KFFR…LMPD). Residues cysteine 60, cysteine 63, cysteine 66, cysteine 70, cysteine 99, cysteine 102, cysteine 105, and cysteine 109 each coordinate [4Fe-4S] cluster.

The protein belongs to the complex I 23 kDa subunit family. In terms of assembly, NDH-1 is composed of 13 different subunits. Subunits NuoA, H, J, K, L, M, N constitute the membrane sector of the complex. [4Fe-4S] cluster is required as a cofactor.

The protein localises to the cell membrane. It catalyses the reaction a quinone + NADH + 5 H(+)(in) = a quinol + NAD(+) + 4 H(+)(out). In terms of biological role, NDH-1 shuttles electrons from NADH, via FMN and iron-sulfur (Fe-S) centers, to quinones in the respiratory chain. The immediate electron acceptor for the enzyme in this species is believed to be ubiquinone. Couples the redox reaction to proton translocation (for every two electrons transferred, four hydrogen ions are translocated across the cytoplasmic membrane), and thus conserves the redox energy in a proton gradient. This Buchnera aphidicola subsp. Acyrthosiphon pisum (strain APS) (Acyrthosiphon pisum symbiotic bacterium) protein is NADH-quinone oxidoreductase subunit I.